The following is a 411-amino-acid chain: Multidrug resistance protein MdtG (411 aa).

10 consecutive transmembrane segments (helical) span residues 14–34 (LFVAWLGCFLTGAAFSLIMPF), 56–76 (LVFSITFLFSAIASPFWGGLA), 89–109 (ALGMSIVMLLMGMAQNIWQFL), 113–133 (AVLGLLGGFIPNANALIATQV), 144–164 (TLSTGGVSGALIGPLIGGLLA), 171–191 (PVFYITAGVLLTCFVLTLLYV), 219–239 (ILSLFVTTMIIQIATGSIAPI), 254–274 (LAFVSGLIASVPGVAALMSAP), 288–308 (ILVFMLIVSVLLLIPMAFVQT), and 376–396 (AVFCVTALVVLFNAVYSWWCL).

The protein belongs to the major facilitator superfamily. DHA1 family. MdtG (TC 2.A.1.2.20) subfamily.

The protein resides in the cell inner membrane. This chain is Multidrug resistance protein MdtG, found in Serratia proteamaculans (strain 568).